A 269-amino-acid chain; its full sequence is 5'-nucleotidase SurE (269 aa).

Residues Asp11, Asp12, Ser43, and Asn101 each contribute to the a divalent metal cation site.

This sequence belongs to the SurE nucleotidase family. It depends on a divalent metal cation as a cofactor.

The protein resides in the cytoplasm. It catalyses the reaction a ribonucleoside 5'-phosphate + H2O = a ribonucleoside + phosphate. Functionally, nucleotidase that shows phosphatase activity on nucleoside 5'-monophosphates. In Prochlorococcus marinus (strain MIT 9313), this protein is 5'-nucleotidase SurE.